Here is a 321-residue protein sequence, read N- to C-terminus: tRNA-dihydrouridine synthase B (321 aa).

Residues 16-18 (PMA) and glutamine 70 contribute to the FMN site. The active-site Proton donor is cysteine 100. Residues lysine 139, 200–202 (NGD), and 224–225 (GR) each bind FMN.

The protein belongs to the Dus family. DusB subfamily. The cofactor is FMN.

The catalysed reaction is a 5,6-dihydrouridine in tRNA + NAD(+) = a uridine in tRNA + NADH + H(+). It catalyses the reaction a 5,6-dihydrouridine in tRNA + NADP(+) = a uridine in tRNA + NADPH + H(+). In terms of biological role, catalyzes the synthesis of 5,6-dihydrouridine (D), a modified base found in the D-loop of most tRNAs, via the reduction of the C5-C6 double bond in target uridines. The chain is tRNA-dihydrouridine synthase B from Pectobacterium carotovorum (Erwinia carotovora).